A 164-amino-acid chain; its full sequence is Protein-export protein SecB (164 aa).

The protein belongs to the SecB family. Homotetramer, a dimer of dimers. One homotetramer interacts with 1 SecA dimer.

Its subcellular location is the cytoplasm. Its function is as follows. One of the proteins required for the normal export of preproteins out of the cell cytoplasm. It is a molecular chaperone that binds to a subset of precursor proteins, maintaining them in a translocation-competent state. It also specifically binds to its receptor SecA. The protein is Protein-export protein SecB of Rhodopseudomonas palustris (strain BisB18).